The following is a 631-amino-acid chain: 1-deoxy-D-xylulose-5-phosphate synthase (631 aa).

Residues His87 and 128–130 (GHS) each bind thiamine diphosphate. A Mg(2+)-binding site is contributed by Asp159. Residues 160–161 (GA), Asn188, Phe295, and Glu377 each bind thiamine diphosphate. Asn188 lines the Mg(2+) pocket.

This sequence belongs to the transketolase family. DXPS subfamily. Homodimer. It depends on Mg(2+) as a cofactor. Requires thiamine diphosphate as cofactor.

It carries out the reaction D-glyceraldehyde 3-phosphate + pyruvate + H(+) = 1-deoxy-D-xylulose 5-phosphate + CO2. The protein operates within metabolic intermediate biosynthesis; 1-deoxy-D-xylulose 5-phosphate biosynthesis; 1-deoxy-D-xylulose 5-phosphate from D-glyceraldehyde 3-phosphate and pyruvate: step 1/1. In terms of biological role, catalyzes the acyloin condensation reaction between C atoms 2 and 3 of pyruvate and glyceraldehyde 3-phosphate to yield 1-deoxy-D-xylulose-5-phosphate (DXP). The protein is 1-deoxy-D-xylulose-5-phosphate synthase of Pseudomonas putida (strain ATCC 700007 / DSM 6899 / JCM 31910 / BCRC 17059 / LMG 24140 / F1).